We begin with the raw amino-acid sequence, 141 residues long: Hemoglobin subunit alpha (141 aa).

The 141-residue stretch at 1-141 folds into the Globin domain; the sequence is VLSPADKTNI…VSTVLTSKYR (141 aa). A Phosphoserine modification is found at S3. K7 is modified (N6-succinyllysine). The residue at position 8 (T8) is a Phosphothreonine. K11 is subject to N6-succinyllysine. N6-acetyllysine; alternate is present on K16. Residue K16 is modified to N6-succinyllysine; alternate. Y24 carries the post-translational modification Phosphotyrosine. Phosphoserine is present on S35. K40 carries the N6-succinyllysine modification. S49 carries the phosphoserine modification. H58 contributes to the O2 binding site. Position 87 (H87) interacts with heme b. S102 carries the phosphoserine modification. T108 carries the post-translational modification Phosphothreonine. Position 124 is a phosphoserine (S124). Phosphothreonine occurs at positions 134 and 137. A Phosphoserine modification is found at S138.

It belongs to the globin family. As to quaternary structure, heterotetramer of two alpha chains and two beta chains. Red blood cells.

Its function is as follows. Involved in oxygen transport from the lung to the various peripheral tissues. Functionally, hemopressin acts as an antagonist peptide of the cannabinoid receptor CNR1. Hemopressin-binding efficiently blocks cannabinoid receptor CNR1 and subsequent signaling. The protein is Hemoglobin subunit alpha (HBA) of Chrysocyon brachyurus (Maned wolf).